The chain runs to 735 residues: Ion-translocating oxidoreductase complex subunit C (735 aa).

4Fe-4S ferredoxin-type domains follow at residues 368–397 (MGAP…QQLY) and 407–436 (KATA…VQYF). Residues cysteine 377, cysteine 380, cysteine 383, cysteine 387, cysteine 416, cysteine 419, cysteine 422, and cysteine 426 each coordinate [4Fe-4S] cluster. The tract at residues 534–715 (QARAKQAAHP…AVDPRKAAVA (182 aa)) is disordered. Over residues 666–689 (QQAGSEPAEPAAPRKAAVEAAIAR) the composition is skewed to low complexity.

It belongs to the 4Fe4S bacterial-type ferredoxin family. RnfC subfamily. As to quaternary structure, the complex is composed of six subunits: RsxA, RsxB, RsxC, RsxD, RsxE and RsxG. It depends on [4Fe-4S] cluster as a cofactor.

The protein localises to the cell inner membrane. In terms of biological role, part of a membrane-bound complex that couples electron transfer with translocation of ions across the membrane. Required to maintain the reduced state of SoxR. The polypeptide is Ion-translocating oxidoreductase complex subunit C (Salmonella paratyphi B (strain ATCC BAA-1250 / SPB7)).